We begin with the raw amino-acid sequence, 670 residues long: Meiotic sister-chromatid recombination protein 6, mitochondrial (670 aa).

Residues 1 to 27 (MLFSRASKIRVSQLMRRLQSTAVGRAA) constitute a mitochondrion transit peptide.

The protein resides in the mitochondrion. Functionally, may be involved in the control of meiotic sister-chromatid recombination. This chain is Meiotic sister-chromatid recombination protein 6, mitochondrial (MSC6), found in Eremothecium gossypii (strain ATCC 10895 / CBS 109.51 / FGSC 9923 / NRRL Y-1056) (Yeast).